The chain runs to 70 residues: U2-agatoxin-Ao1l (70 aa).

The N-terminal stretch at 1-20 (MRAIISLLLISAMVFSIIEA) is a signal peptide. Positions 21–34 (VPEEEGLQLSEDER) are excised as a propeptide. Disulfide bonds link Cys37/Cys53, Cys44/Cys58, and Cys52/Cys68. Residue Leu69 is modified to Leucine amide.

This sequence belongs to the neurotoxin 01 (U2-agtx) family. In terms of tissue distribution, expressed by the venom gland.

It is found in the secreted. Its function is as follows. Insect active toxin causing rapid but reversible paralysis in crickets. No activity shown in mammals. Does not show effect on mammalian voltage-gated calcium channels. The chain is U2-agatoxin-Ao1l from Agelena orientalis (Funnel-web spider).